Here is a 108-residue protein sequence, read N- to C-terminus: RNA silencing suppressor (108 aa).

Positions 47–50 (RRRR) are basic. The segment at 57–78 (CHRCYRLWPPTVFTTRCDNKHC) adopts a C4-type zinc-finger fold.

This sequence belongs to the carlaviruses nucleic acid-binding protein family.

In terms of biological role, suppressor of viral-induced RNA silencing. Increases the accumulation of viral RNA and enhances viral cell-to-cell movement by inhibiting RNA silencing. The protein is RNA silencing suppressor of Solanum tuberosum (Potato).